Consider the following 363-residue polypeptide: Cytochrome P450 CYP82D47 (363 aa).

Position 342 (Cys342) interacts with heme.

This sequence belongs to the cytochrome P450 family. Heme serves as cofactor.

Its function is as follows. Probable heme-thiolate monooxygenase. The protein is Cytochrome P450 CYP82D47 of Panax ginseng (Korean ginseng).